The following is a 136-amino-acid chain: Large ribosomal subunit protein bL19 (136 aa).

The tract at residues 1 to 23 is disordered; it reads MEETVNNQETPETSEEETADEET. Positions 12-23 are enriched in acidic residues; it reads ETSEEETADEET.

This sequence belongs to the bacterial ribosomal protein bL19 family.

Functionally, this protein is located at the 30S-50S ribosomal subunit interface and may play a role in the structure and function of the aminoacyl-tRNA binding site. This chain is Large ribosomal subunit protein bL19, found in Dehalococcoides mccartyi (strain ATCC BAA-2266 / KCTC 15142 / 195) (Dehalococcoides ethenogenes (strain 195)).